The chain runs to 23 residues: Coenzyme PQQ synthesis protein A (23 aa).

Residues 15-19 (EVTMY) constitute a cross-link (pyrroloquinoline quinone (Glu-Tyr)).

This sequence belongs to the PqqA family.

Its pathway is cofactor biosynthesis; pyrroloquinoline quinone biosynthesis. Functionally, required for coenzyme pyrroloquinoline quinone (PQQ) biosynthesis. PQQ is probably formed by cross-linking a specific glutamate to a specific tyrosine residue and excising these residues from the peptide. In Ectopseudomonas mendocina (strain ymp) (Pseudomonas mendocina), this protein is Coenzyme PQQ synthesis protein A.